A 489-amino-acid chain; its full sequence is L-asparagine permease 1 (489 aa).

The next 12 helical transmembrane spans lie at 25–45 (QLQM…GAGG), 49–69 (KAGP…FLIL), 100–120 (AVGW…TTAI), 137–157 (ILAL…VEWF), 162–182 (FWAA…GTVF), 210–230 (WLPL…VELV), 255–275 (IAIF…YTAY), 289–309 (IGFH…ALSS), 344–364 (YGGI…NAFK), 369–389 (FEIV…TIVL), 413–433 (SPYS…TMAS), and 439–459 (TWTV…WYLV).

This sequence belongs to the amino acid-polyamine-organocation (APC) superfamily. Amino acid transporter (AAT) (TC 2.A.3.1) family.

It localises to the cell membrane. In Mycobacterium tuberculosis (strain CDC 1551 / Oshkosh), this protein is L-asparagine permease 1 (ansP1).